Reading from the N-terminus, the 1171-residue chain is Myosin-B/C (1171 aa).

Residues 105-780 (ETVDDIGYLP…AAKELSILQR (676 aa)) enclose the Myosin motor domain. Residue 199-206 (GESGAGKT) participates in ATP binding. Residues 671–681 (AHFIRCLKPNE) are actin-binding. The interval 810-1171 (IHFLTRLESN…CFEACAPDRP (362 aa)) is tail.

It belongs to the TRAFAC class myosin-kinesin ATPase superfamily. Myosin family.

It localises to the cytoplasm. Myosins are actin-based motor molecules with ATPase activity. Unconventional myosins serve in intracellular movements. Their highly divergent tails are presumed to bind to membranous compartments, which would be moved relative to actin filaments. Plays a role in proper daughter cell budding and separation. The polypeptide is Myosin-B/C (Toxoplasma gondii).